The primary structure comprises 510 residues: uncharacterized protein (510 aa).

The N-terminal stretch at 1–19 (MLILLILYFLFLQLHIFDS) is a signal peptide. The helical transmembrane segment at 28 to 48 (IYIHYAICKFIFLLEIYKLIA) threads the bilayer.

Its subcellular location is the host membrane. This is an uncharacterized protein from Sulfolobus islandicus rod-shaped virus 1 (SIRV-1).